A 517-amino-acid chain; its full sequence is MVKEIDINKLLAQENNALNTILSQVNELCKQNKQLQGLIEIQNETKELEKEHNRSLPWFKRFVKTVSNVKYILIKSEEQLTNEAIKYNNKILKDIDNKIYNIAEKSAPLKQALQEEIEKNFKDLTKKDLSKDQRARLSEVFFSYKSKPERFSALHMTNPLQFINAEALEKQYNSLNATKQNIQNLISANSNIKELKEIQKQVAEIRAEVPHTFFEKLNNIWQNVKNVFVNNSEQVLAKNKESNTRTIRKIDEQLYKTKHKFEELIENKERNIKDIIAKLPDNEKLQKIVSNLTNHMASQKEPILANASLAKPLENNITPPSPLPENNIPSPPPPPPPSPLPENNIPSSPPPPPPPPLPENNIPSPPPPPPPPPPPPMAPAQAETLSKPIESTTVKKLANQPRPSIDTSDLMREIAGPKKLKKVEFDPNTGKPVAHSHSKPAQNVNALSGLESIFARRAVIKVSDSSSSESDSGNWSDVSVNRNKSKMLKTKGERDAKMTTHAQKINNRNSQNPSFVR.

2 disordered regions span residues 313-441 (LENN…SKPA) and 461-517 (KVSD…SFVR). 2 stretches are compositionally biased toward pro residues: residues 319-340 (PPSP…PSPL) and 347-378 (SSPP…PPMA). In terms of domain architecture, WH2 spans 406–423 (DTSDLMREIAGPKKLKKV). A central and acidic domains region spans residues 444 to 477 (VNALSGLESIFARRAVIKVSDSSSSESDSGNWSD). The segment covering 463–479 (SDSSSSESDSGNWSDVS) has biased composition (low complexity). Residues 500–517 (THAQKINNRNSQNPSFVR) are compositionally biased toward polar residues.

As to quaternary structure, homodimer.

Its subcellular location is the cell surface. In terms of biological role, recruits and activates the Arp2/3 complex, which in turn leads to actin polymerization, promoting Rickettsia motility during infection. In Rickettsia conorii (strain ATCC VR-613 / Malish 7), this protein is Arp2/3 complex-activating protein rickA (rickA).